Reading from the N-terminus, the 278-residue chain is MDTELLKTFLEVSRTRHFGRAAEALYLTQSAVSFRIRQLENQLGVNLFTRHRNNIRLTTAGEKLLPYAETLMNTWQAARKEVAHTSRHNEFSIGASASLWECMLNAWLGRLYQLQEPQSGLQFEARIAQRQSLVKQLHERQLDLLITTEAPKMDEFSSQLLGHFTLALYCSSPARKKSELNYLRLEWGPDFQQHETGLIAADEVPVLTTSSAELARQQLSALNGCSWLPVNWANEKGGLHTVADSATLSRPLYAIWLQNSDKYSLICDLLKTDVLDGQ.

The HTH lysR-type domain maps to 1–58 (MDTELLKTFLEVSRTRHFGRAAEALYLTQSAVSFRIRQLENQLGVNLFTRHRNNIRLT). Positions 18-37 (FGRAAEALYLTQSAVSFRIR) form a DNA-binding region, H-T-H motif.

It belongs to the LysR transcriptional regulatory family.

Negatively regulates the transcription of the flagellar master operon flhDC by binding to the upstream region of the operon. The protein is HTH-type transcriptional regulator HdfR of Salmonella newport (strain SL254).